The chain runs to 423 residues: UDP-N-acetylglucosamine 1-carboxyvinyltransferase 1 (423 aa).

Position 23–24 (23–24 (KN)) interacts with phosphoenolpyruvate. Residue arginine 96 participates in UDP-N-acetyl-alpha-D-glucosamine binding. Cysteine 120 functions as the Proton donor in the catalytic mechanism. A 2-(S-cysteinyl)pyruvic acid O-phosphothioketal modification is found at cysteine 120. UDP-N-acetyl-alpha-D-glucosamine contacts are provided by residues 125–129 (RPIDL), aspartate 309, and valine 331.

Belongs to the EPSP synthase family. MurA subfamily.

It is found in the cytoplasm. The catalysed reaction is phosphoenolpyruvate + UDP-N-acetyl-alpha-D-glucosamine = UDP-N-acetyl-3-O-(1-carboxyvinyl)-alpha-D-glucosamine + phosphate. Its pathway is cell wall biogenesis; peptidoglycan biosynthesis. In terms of biological role, cell wall formation. Adds enolpyruvyl to UDP-N-acetylglucosamine. The sequence is that of UDP-N-acetylglucosamine 1-carboxyvinyltransferase 1 from Streptococcus thermophilus (strain CNRZ 1066).